Consider the following 421-residue polypeptide: MAAAFRRGCRVLRSVSHFECRTQHSKAAHKQEPGLGFSFELTEQQKEFQATARKFAREEIIPVAPEYDKSGEYPFPLIKRAWELGLINAHIPESCGGLGLGTFDACLITEELAYGCTGVQTAIEANSLGQMPVILAGNDQQKKKYLGRMTEQPMMCAYCVTEPSAGSDVAAIKTKAEKKGDEYVINGQKMWITNGGKANWYFLLARSNPDPKVPASKAFTGFIVEADTPGIHIGKKELNMGQRCSDTRGIAFEDVRVPKENVLIGEGAGFKIAMGAFDRTRPTVAAGAVGLAQRALDEATKYALDRKTFGKLLVEHQGVSFLLAEMAMKVELARLSYQRAAWEVDSGRRNTYYASIAKAFAGDIANQLATDAVQIFGGYGFNTEYPVEKLMRDAKIYQIYEGTAQIQRLIIAREHIEKYKN.

The transit peptide at 1-25 (MAAAFRRGCRVLRSVSHFECRTQHS) directs the protein to the mitochondrion. K30 and K69 each carry N6-acetyllysine; alternate. Residues K30 and K69 each carry the N6-succinyllysine; alternate modification. K79 is subject to N6-acetyllysine. FAD is bound at residue 158–167 (YCVTEPSAGS). Position 167 (S167) interacts with octanoyl-CoA. K179 is subject to N6-succinyllysine. 191–193 (WIT) provides a ligand contact to FAD. N6-acetyllysine; alternate is present on K212. K212 is subject to N6-succinyllysine; alternate. S216 provides a ligand contact to octanoyl-CoA. Residues K217, K235, K259, and K271 each carry the N6-acetyllysine; alternate modification. N6-succinyllysine; alternate is present on residues K217, K235, K259, and K271. Octanoyl-CoA is bound by residues D278 and R281. K301 bears the N6-acetyllysine mark. Residues 306–308 (RKT) and 316–317 (HQ) each bind FAD. Octanoyl-CoA is bound by residues R349 and T351. Phosphothreonine is present on T351. 374–378 (QIFGG) is an FAD binding site. E401 lines the octanoyl-CoA pocket. The active-site Proton acceptor is the E401. Position 402–405 (402–405 (GTAQ)) interacts with FAD.

The protein belongs to the acyl-CoA dehydrogenase family. In terms of assembly, homotetramer. Interacts with the heterodimeric electron transfer flavoprotein ETF. The cofactor is FAD. In terms of processing, acetylated. Could occur at proximity of the cofactor-binding sites and reduce the catalytic activity. Could be deacetylated by SIRT3.

Its subcellular location is the mitochondrion matrix. It carries out the reaction a medium-chain 2,3-saturated fatty acyl-CoA + oxidized [electron-transfer flavoprotein] + H(+) = a medium-chain (2E)-enoyl-CoA + reduced [electron-transfer flavoprotein]. It catalyses the reaction pentanoyl-CoA + oxidized [electron-transfer flavoprotein] + H(+) = (2E)-pentenoyl-CoA + reduced [electron-transfer flavoprotein]. The enzyme catalyses hexanoyl-CoA + oxidized [electron-transfer flavoprotein] + H(+) = (2E)-hexenoyl-CoA + reduced [electron-transfer flavoprotein]. The catalysed reaction is octanoyl-CoA + oxidized [electron-transfer flavoprotein] + H(+) = (2E)-octenoyl-CoA + reduced [electron-transfer flavoprotein]. It carries out the reaction decanoyl-CoA + oxidized [electron-transfer flavoprotein] + H(+) = (2E)-decenoyl-CoA + reduced [electron-transfer flavoprotein]. It catalyses the reaction dodecanoyl-CoA + oxidized [electron-transfer flavoprotein] + H(+) = (2E)-dodecenoyl-CoA + reduced [electron-transfer flavoprotein]. The enzyme catalyses tetradecanoyl-CoA + oxidized [electron-transfer flavoprotein] + H(+) = (2E)-tetradecenoyl-CoA + reduced [electron-transfer flavoprotein]. The catalysed reaction is oxidized [electron-transfer flavoprotein] + hexadecanoyl-CoA + H(+) = (2E)-hexadecenoyl-CoA + reduced [electron-transfer flavoprotein]. Its pathway is lipid metabolism; mitochondrial fatty acid beta-oxidation. Medium-chain specific acyl-CoA dehydrogenase is one of the acyl-CoA dehydrogenases that catalyze the first step of mitochondrial fatty acid beta-oxidation, an aerobic process breaking down fatty acids into acetyl-CoA and allowing the production of energy from fats. The first step of fatty acid beta-oxidation consists in the removal of one hydrogen from C-2 and C-3 of the straight-chain fatty acyl-CoA thioester, resulting in the formation of trans-2-enoyl-CoA. Electron transfer flavoprotein (ETF) is the electron acceptor that transfers electrons to the main mitochondrial respiratory chain via ETF-ubiquinone oxidoreductase (ETF dehydrogenase). Among the different mitochondrial acyl-CoA dehydrogenases, medium-chain specific acyl-CoA dehydrogenase acts specifically on acyl-CoAs with saturated 6 to 12 carbons long primary chains. This Mus musculus (Mouse) protein is Medium-chain specific acyl-CoA dehydrogenase, mitochondrial.